Reading from the N-terminus, the 609-residue chain is MPDYRSKTSTHGRNMAGARGLWRATGMKDEDFGKPIIAVVNSFTQFVPGHVHLKDLGQMVAEQIQAAGGVAKEFNTIAVDDGIAMGHDGMLYSLPSRDLIADSVEYMVNAHCADAMVCISNCDKITPGMLMAAMRLNIPVVFVSGGPMEAGKVKFRGNEKAIDLVDAMVVAADDSYTDEEVQAFERSACPTCGSCSGMFTANSMNCLTEALGLSLPGNGSIVATHANRKKLFLKAGELIVSLAKRYYEQDDSSILPRSIATKAAYENAMTLDIAMGGSTNTVLHLLAAASEAEVDFTMDDIDRLSRNVPVLCKVAPAKQDVHMEDVHRAGGIMSILGELDRAKLLNTTVSTVHEKTLQDALNKWDIIRTEDADVYEFFRSSPGGVPTQVAFSQNRYYSTLDGDRENGVIRNAEHAFSKDGGLAVLYGNIALEGCIVKTAGVDESILKFNGTARVFESQDAAVEAILGNEIKAGDVVVIRYEGPRGGPGMQEMLYPTSYLKSKGLGKDCALITDGRFSGGSSGLSIGHISPEAAEGGAIGLVEDGDLIEIDIPNRSMNLKVDDETLAARRKAQDEKGWKPVEERKRKVSKALKVYAMHTTSAAKGAVRIL.

D81 serves as a coordination point for Mg(2+). C122 provides a ligand contact to [2Fe-2S] cluster. The Mg(2+) site is built by D123 and K124. Residue K124 is modified to N6-carboxylysine. C195 lines the [2Fe-2S] cluster pocket. Residue E491 participates in Mg(2+) binding. The Proton acceptor role is filled by S517.

This sequence belongs to the IlvD/Edd family. As to quaternary structure, homodimer. The cofactor is [2Fe-2S] cluster. Mg(2+) serves as cofactor.

It catalyses the reaction (2R)-2,3-dihydroxy-3-methylbutanoate = 3-methyl-2-oxobutanoate + H2O. The enzyme catalyses (2R,3R)-2,3-dihydroxy-3-methylpentanoate = (S)-3-methyl-2-oxopentanoate + H2O. Its pathway is amino-acid biosynthesis; L-isoleucine biosynthesis; L-isoleucine from 2-oxobutanoate: step 3/4. The protein operates within amino-acid biosynthesis; L-valine biosynthesis; L-valine from pyruvate: step 3/4. Functionally, functions in the biosynthesis of branched-chain amino acids. Catalyzes the dehydration of (2R,3R)-2,3-dihydroxy-3-methylpentanoate (2,3-dihydroxy-3-methylvalerate) into 2-oxo-3-methylpentanoate (2-oxo-3-methylvalerate) and of (2R)-2,3-dihydroxy-3-methylbutanoate (2,3-dihydroxyisovalerate) into 2-oxo-3-methylbutanoate (2-oxoisovalerate), the penultimate precursor to L-isoleucine and L-valine, respectively. The polypeptide is Dihydroxy-acid dehydratase 1 (Acinetobacter baylyi (strain ATCC 33305 / BD413 / ADP1)).